A 440-amino-acid polypeptide reads, in one-letter code: Ribosomal protein uS12 methylthiotransferase RimO (440 aa).

One can recognise an MTTase N-terminal domain in the interval 8 to 124 (TSVFLLSLGC…VLDALGARYH (117 aa)). [4Fe-4S] cluster is bound by residues Cys-17, Cys-53, Cys-87, Cys-148, Cys-152, and Cys-155. The Radical SAM core domain occupies 134-363 (LTPPHSSYLK…MELQEEIARK (230 aa)). One can recognise a TRAM domain in the interval 366–437 (EAFVGSLMTV…AYELHGTVES (72 aa)).

It belongs to the methylthiotransferase family. RimO subfamily. Requires [4Fe-4S] cluster as cofactor.

The protein resides in the cytoplasm. The catalysed reaction is L-aspartate(89)-[ribosomal protein uS12]-hydrogen + (sulfur carrier)-SH + AH2 + 2 S-adenosyl-L-methionine = 3-methylsulfanyl-L-aspartate(89)-[ribosomal protein uS12]-hydrogen + (sulfur carrier)-H + 5'-deoxyadenosine + L-methionine + A + S-adenosyl-L-homocysteine + 2 H(+). In terms of biological role, catalyzes the methylthiolation of an aspartic acid residue of ribosomal protein uS12. This Chlorobium luteolum (strain DSM 273 / BCRC 81028 / 2530) (Pelodictyon luteolum) protein is Ribosomal protein uS12 methylthiotransferase RimO.